Consider the following 404-residue polypeptide: Cysteine desulfurase IscS (404 aa).

Pyridoxal 5'-phosphate-binding positions include Ala75–Thr76, Asn155, Gln183, and Ser203–His205. N6-(pyridoxal phosphate)lysine is present on Lys206. Pyridoxal 5'-phosphate is bound at residue Thr243. Cys328 serves as the catalytic Cysteine persulfide intermediate. A [2Fe-2S] cluster-binding site is contributed by Cys328.

The protein belongs to the class-V pyridoxal-phosphate-dependent aminotransferase family. NifS/IscS subfamily. In terms of assembly, homodimer. Forms a heterotetramer with IscU, interacts with other sulfur acceptors. It depends on pyridoxal 5'-phosphate as a cofactor.

It localises to the cytoplasm. It carries out the reaction (sulfur carrier)-H + L-cysteine = (sulfur carrier)-SH + L-alanine. Its pathway is cofactor biosynthesis; iron-sulfur cluster biosynthesis. Functionally, master enzyme that delivers sulfur to a number of partners involved in Fe-S cluster assembly, tRNA modification or cofactor biosynthesis. Catalyzes the removal of elemental sulfur atoms from cysteine to produce alanine. Functions as a sulfur delivery protein for Fe-S cluster synthesis onto IscU, an Fe-S scaffold assembly protein, as well as other S acceptor proteins. This is Cysteine desulfurase IscS from Neisseria meningitidis serogroup C / serotype 2a (strain ATCC 700532 / DSM 15464 / FAM18).